The primary structure comprises 70 residues: ATP synthase subunit c (70 aa).

The next 2 helical transmembrane spans lie at 4–24 (IAAAIAIGLGALGAGIGNGLI) and 49–69 (GIALVEALPIIAVVIAFLAFF).

This sequence belongs to the ATPase C chain family. F-type ATPases have 2 components, F(1) - the catalytic core - and F(0) - the membrane proton channel. F(1) has five subunits: alpha(3), beta(3), gamma(1), delta(1), epsilon(1). F(0) has three main subunits: a(1), b(2) and c(10-14). The alpha and beta chains form an alternating ring which encloses part of the gamma chain. F(1) is attached to F(0) by a central stalk formed by the gamma and epsilon chains, while a peripheral stalk is formed by the delta and b chains. The F(1)F(0) complex interacts with SpoIIIJ and YqjG; YqgA is found in the same complex.

The protein resides in the cell membrane. F(1)F(0) ATP synthase produces ATP from ADP in the presence of a proton or sodium gradient. F-type ATPases consist of two structural domains, F(1) containing the extramembraneous catalytic core and F(0) containing the membrane proton channel, linked together by a central stalk and a peripheral stalk. During catalysis, ATP synthesis in the catalytic domain of F(1) is coupled via a rotary mechanism of the central stalk subunits to proton translocation. Its function is as follows. Key component of the F(0) channel; it plays a direct role in translocation across the membrane. A homomeric c-ring of between 10-14 subunits forms the central stalk rotor element with the F(1) delta and epsilon subunits. The chain is ATP synthase subunit c from Bacillus subtilis (strain 168).